A 387-amino-acid chain; its full sequence is Phosphoglycerate kinase (387 aa).

Substrate-binding positions include 21-23, Arg-36, 59-62, Arg-113, and Arg-146; these read DLN and HLGR. Residues Lys-197, Glu-314, and 340 to 343 contribute to the ATP site; that span reads GGDT.

It belongs to the phosphoglycerate kinase family. In terms of assembly, monomer.

Its subcellular location is the cytoplasm. The catalysed reaction is (2R)-3-phosphoglycerate + ATP = (2R)-3-phospho-glyceroyl phosphate + ADP. It participates in carbohydrate degradation; glycolysis; pyruvate from D-glyceraldehyde 3-phosphate: step 2/5. The protein is Phosphoglycerate kinase of Alcanivorax borkumensis (strain ATCC 700651 / DSM 11573 / NCIMB 13689 / SK2).